The following is a 261-amino-acid chain: tRNA pseudouridine synthase A (261 aa).

Residue Asp-51 is the Nucleophile of the active site. Tyr-109 provides a ligand contact to substrate.

The protein belongs to the tRNA pseudouridine synthase TruA family. As to quaternary structure, homodimer.

It catalyses the reaction uridine(38/39/40) in tRNA = pseudouridine(38/39/40) in tRNA. Formation of pseudouridine at positions 38, 39 and 40 in the anticodon stem and loop of transfer RNAs. The polypeptide is tRNA pseudouridine synthase A (Shewanella baltica (strain OS223)).